The sequence spans 729 residues: MLYKGDTLYLDWLEDGIAELVFDAPGSVNKLDTATVASLGEAIGVLEQQSDLKGLLLRSNKAAFIVGADITEFLSLFLVPEEQLSQWLHFANSVFNRLEDLPVPTIAAVNGYALGGGCECVLATDYRLATPDLRIGLPETKLGIMPGFGGSVRMPRMLGADSALEIIAAGKDVGADQALKIGLVDGVVKAEKLIEGAMAILRQAINGDLDWKAKRQPKLEPLKLSKIEATMSFTIAKGMVAQTAGKHYPAPITAVKTIEAAARFGREEALNLENKSFVPLAHTNEARALVGIFLNDQYVKGKAKKLTKDVETPKQAAVLGAGIMGGGIAYQSAWKGVPVIMKDINDKSLALGMTEAAKLLNKQLERGKIDGLKLAGVISTIHPTLDYAGFERVDVVVEAIVENPKVKKAVLAETEQKVRPDTVLASNTSTIPISELANALERPENFCGMHFFNPVHRMPLVEIIRGEKSSDETIAKVVAWASKMGKTPIVVNDCPGFFVNRVLFPYFAGFSQLLRDGADFRKIDKVMEKQFGWPMGPAYLLDVVGIDTAHHAQAVMAAGFPQRMQKDYRDAIDALFDANRFGQKNGLGFWHYKEDSKGKPKKEEDAAVDDLLAEVSQPKRDFSEEEIIARMMIPMVNEVVRCLEEGIIATPAEADMALVYGLGFPPFHGGAFRWLDTLGSAKYLDMAQQYQHLGPLYEVPEGLRNKARHNEPYYPPVEPARPVGDLKTA.

Positions 1–189 (MLYKGDTLYL…KIGLVDGVVK (189 aa)) are enoyl-CoA hydratase/isomerase. Position 296 (Asp296) interacts with substrate. Residues 311–729 (ETPKQAAVLG…ARPVGDLKTA (419 aa)) are 3-hydroxyacyl-CoA dehydrogenase. Residues Met324, Asp343, 400–402 (IVE), Lys407, and Ser429 each bind NAD(+). His450 acts as the For 3-hydroxyacyl-CoA dehydrogenase activity in catalysis. Asn453 is an NAD(+) binding site. Substrate contacts are provided by Asn500 and Tyr660. Positions 708–729 (RHNEPYYPPVEPARPVGDLKTA) are disordered.

It in the N-terminal section; belongs to the enoyl-CoA hydratase/isomerase family. In the C-terminal section; belongs to the 3-hydroxyacyl-CoA dehydrogenase family. As to quaternary structure, heterotetramer of two alpha chains (FadB) and two beta chains (FadA).

The catalysed reaction is a (3S)-3-hydroxyacyl-CoA + NAD(+) = a 3-oxoacyl-CoA + NADH + H(+). It carries out the reaction a (3S)-3-hydroxyacyl-CoA = a (2E)-enoyl-CoA + H2O. It catalyses the reaction a 4-saturated-(3S)-3-hydroxyacyl-CoA = a (3E)-enoyl-CoA + H2O. The enzyme catalyses (3S)-3-hydroxybutanoyl-CoA = (3R)-3-hydroxybutanoyl-CoA. The catalysed reaction is a (3Z)-enoyl-CoA = a 4-saturated (2E)-enoyl-CoA. It carries out the reaction a (3E)-enoyl-CoA = a 4-saturated (2E)-enoyl-CoA. It functions in the pathway lipid metabolism; fatty acid beta-oxidation. Its function is as follows. Involved in the aerobic and anaerobic degradation of long-chain fatty acids via beta-oxidation cycle. Catalyzes the formation of 3-oxoacyl-CoA from enoyl-CoA via L-3-hydroxyacyl-CoA. It can also use D-3-hydroxyacyl-CoA and cis-3-enoyl-CoA as substrate. The sequence is that of Fatty acid oxidation complex subunit alpha from Escherichia coli O157:H7.